A 255-amino-acid polypeptide reads, in one-letter code: Acetylglutamate kinase (255 aa).

Residues 40–41 (GG), Arg62, and Asn153 contribute to the substrate site.

The protein belongs to the acetylglutamate kinase family. ArgB subfamily.

The protein localises to the cytoplasm. It catalyses the reaction N-acetyl-L-glutamate + ATP = N-acetyl-L-glutamyl 5-phosphate + ADP. It functions in the pathway amino-acid biosynthesis; L-arginine biosynthesis; N(2)-acetyl-L-ornithine from L-glutamate: step 2/4. Functionally, catalyzes the ATP-dependent phosphorylation of N-acetyl-L-glutamate. This chain is Acetylglutamate kinase, found in Bacillus cereus (strain ZK / E33L).